A 101-amino-acid polypeptide reads, in one-letter code: Integration host factor subunit beta (101 aa).

The disordered stretch occupies residues 57-76 (PARAGRNPRTGEHVPVDQKS).

It belongs to the bacterial histone-like protein family. In terms of assembly, heterodimer of an alpha and a beta chain.

This protein is one of the two subunits of integration host factor, a specific DNA-binding protein that functions in genetic recombination as well as in transcriptional and translational control. This Nitrobacter winogradskyi (strain ATCC 25391 / DSM 10237 / CIP 104748 / NCIMB 11846 / Nb-255) protein is Integration host factor subunit beta.